The following is a 285-amino-acid chain: MKGQVVRIIAGFYDVVDPKNRKLYPLLRGSGLLRLNETSPIVGDFVDFEEKGFIKKIYERKNQLIRPKVANIDQALVFISIREPNFSSLLLDKFLLVIEAKNIPVILLVTKIDLDSNFENLLLDYQKMNYNIFFINNKKNEIPVELKAELEKKLNFVIGQTGVGKTSFINNFLDKKFAIQEISQTLNRGKHTTRVVQIIEKENFRIIDSPGFSSFSYSEISKNEIRNAFKIFKKFSSDCKFRSCFHFQEKTDQCGIKRALKDGKIPENRYKNYLYFLGKYEKKNY.

In terms of domain architecture, CP-type G spans 61–215 (KNQLIRPKVA…IIDSPGFSSF (155 aa)). Residues 110–113 (TKID) and 159–167 (GQTGVGKTS) contribute to the GTP site. The Zn(2+) site is built by Cys-239, Cys-244, His-246, and Cys-254.

The protein belongs to the TRAFAC class YlqF/YawG GTPase family. RsgA subfamily. As to quaternary structure, monomer. Associates with 30S ribosomal subunit, binds 16S rRNA. Requires Zn(2+) as cofactor.

It is found in the cytoplasm. In terms of biological role, one of several proteins that assist in the late maturation steps of the functional core of the 30S ribosomal subunit. Helps release RbfA from mature subunits. May play a role in the assembly of ribosomal proteins into the subunit. Circularly permuted GTPase that catalyzes slow GTP hydrolysis, GTPase activity is stimulated by the 30S ribosomal subunit. This is Small ribosomal subunit biogenesis GTPase RsgA from Mesomycoplasma hyopneumoniae (strain J / ATCC 25934 / NCTC 10110) (Mycoplasma hyopneumoniae).